The following is a 236-amino-acid chain: 2-C-methyl-D-erythritol 4-phosphate cytidylyltransferase (236 aa).

Belongs to the IspD/TarI cytidylyltransferase family. IspD subfamily. As to quaternary structure, homodimer.

The enzyme catalyses 2-C-methyl-D-erythritol 4-phosphate + CTP + H(+) = 4-CDP-2-C-methyl-D-erythritol + diphosphate. It functions in the pathway isoprenoid biosynthesis; isopentenyl diphosphate biosynthesis via DXP pathway; isopentenyl diphosphate from 1-deoxy-D-xylulose 5-phosphate: step 2/6. In terms of biological role, catalyzes the formation of 4-diphosphocytidyl-2-C-methyl-D-erythritol from CTP and 2-C-methyl-D-erythritol 4-phosphate (MEP). The sequence is that of 2-C-methyl-D-erythritol 4-phosphate cytidylyltransferase from Cronobacter sakazakii (strain ATCC BAA-894) (Enterobacter sakazakii).